A 690-amino-acid polypeptide reads, in one-letter code: uncharacterized protein (690 aa).

The interval 553–601 (DESELLENEDKSESLENEDKSESLENEDKSESLENEDKSESLENEKKEK) is disordered. Residues 560 to 601 (NEDKSESLENEDKSESLENEDKSESLENEDKSESLENEKKEK) show a composition bias toward basic and acidic residues.

It belongs to the glycosyltransferase 2 family.

This is an uncharacterized protein from Rickettsia bellii (strain RML369-C).